The primary structure comprises 208 residues: Protein-L-isoaspartate O-methyltransferase (208 aa).

Residue Ser-59 is part of the active site.

It belongs to the methyltransferase superfamily. L-isoaspartyl/D-aspartyl protein methyltransferase family.

It is found in the cytoplasm. It catalyses the reaction [protein]-L-isoaspartate + S-adenosyl-L-methionine = [protein]-L-isoaspartate alpha-methyl ester + S-adenosyl-L-homocysteine. Functionally, catalyzes the methyl esterification of L-isoaspartyl residues in peptides and proteins that result from spontaneous decomposition of normal L-aspartyl and L-asparaginyl residues. It plays a role in the repair and/or degradation of damaged proteins. The protein is Protein-L-isoaspartate O-methyltransferase of Sodalis glossinidius (strain morsitans).